The sequence spans 29 residues: Cytochrome b6-f complex subunit 8 (29 aa).

The chain crosses the membrane as a helical span at residues 3–23 (ITSIAWGALMVVFTFSLSLVV).

This sequence belongs to the PetN family. As to quaternary structure, the 4 large subunits of the cytochrome b6-f complex are cytochrome b6, subunit IV (17 kDa polypeptide, PetD), cytochrome f and the Rieske protein, while the 4 small subunits are PetG, PetL, PetM and PetN. The complex functions as a dimer.

The protein localises to the plastid membrane. Its function is as follows. Component of the cytochrome b6-f complex, which mediates electron transfer between photosystem II (PSII) and photosystem I (PSI), cyclic electron flow around PSI, and state transitions. This is Cytochrome b6-f complex subunit 8 from Aneura mirabilis (Parasitic liverwort).